The sequence spans 877 residues: Oligopeptide transporter 2 (877 aa).

Residues Met1–Arg167 are Cytoplasmic-facing. Residues Ala168–His188 form a helical membrane-spanning segment. Position 189 (Arg189) is a topological domain, extracellular. Residues Val190–Ala210 traverse the membrane as a helical segment. Residues Trp211–Gln240 lie on the Cytoplasmic side of the membrane. A helical membrane pass occupies residues Met241–Leu261. Over Thr262–Ser272 the chain is Extracellular. Residues Phe273–Ile293 form a helical membrane-spanning segment. Residues Leu294–Phe334 lie on the Cytoplasmic side of the membrane. A helical membrane pass occupies residues Phe335–Ile355. Residues Leu356–Asn374 are Extracellular-facing. Residue Asn374 is glycosylated (N-linked (GlcNAc...) asparagine). Residues Ile375–Ile395 traverse the membrane as a helical segment. Over Ser396–Pro404 the chain is Cytoplasmic. Residues Phe405–Val425 traverse the membrane as a helical segment. At Tyr426–Asn480 the chain is on the extracellular side. The chain crosses the membrane as a helical span at residues Leu481 to Val501. Residues His502–Glu553 are Cytoplasmic-facing. Residues Val554 to Val574 traverse the membrane as a helical segment. Over Glu575–Pro582 the chain is Extracellular. A helical transmembrane segment spans residues Val583 to Leu603. The Cytoplasmic segment spans residues Gln604–Asn614. Residues Leu615–Leu635 traverse the membrane as a helical segment. Topologically, residues Lys636–Cys671 are extracellular. Residues Val672–Ile692 form a helical membrane-spanning segment. Residues Lys693–Tyr730 lie on the Cytoplasmic side of the membrane. The helical transmembrane segment at Ile731–Val751 threads the bilayer. Over Trp752–Met766 the chain is Extracellular. A helical transmembrane segment spans residues Leu767–Ile789. Residues Val790–Tyr811 lie on the Cytoplasmic side of the membrane. The chain crosses the membrane as a helical span at residues Val812 to Val832. Residues Gln833–Pro877 are Extracellular-facing. An N-linked (GlcNAc...) asparagine glycan is attached at Asn860.

The protein belongs to the oligopeptide OPT transporter family.

It is found in the membrane. Transports tetra- and pentapeptides. Does not transport glutathione. This chain is Oligopeptide transporter 2 (OPT2), found in Saccharomyces cerevisiae (strain ATCC 204508 / S288c) (Baker's yeast).